A 473-amino-acid polypeptide reads, in one-letter code: Adenosylhomocysteinase (473 aa).

Substrate-binding residues include Thr64, Asp139, and Glu199. 200–202 (TTT) contacts NAD(+). Residues Lys229 and Asp233 each coordinate substrate. NAD(+)-binding positions include Asn234, 263-268 (GYGDVG), Glu286, Asn321, 342-344 (IGH), and Asn387.

The protein belongs to the adenosylhomocysteinase family. Requires NAD(+) as cofactor.

It localises to the cytoplasm. It carries out the reaction S-adenosyl-L-homocysteine + H2O = L-homocysteine + adenosine. It functions in the pathway amino-acid biosynthesis; L-homocysteine biosynthesis; L-homocysteine from S-adenosyl-L-homocysteine: step 1/1. Its function is as follows. May play a key role in the regulation of the intracellular concentration of adenosylhomocysteine. This is Adenosylhomocysteinase from Paraburkholderia phytofirmans (strain DSM 17436 / LMG 22146 / PsJN) (Burkholderia phytofirmans).